A 227-amino-acid chain; its full sequence is Phosphoglycolate phosphatase (227 aa).

Catalysis depends on aspartate 8, which acts as the Nucleophile. Mg(2+) contacts are provided by aspartate 8 and aspartate 10. Lysine 150 is a substrate binding site. Aspartate 173 and aspartate 177 together coordinate Mg(2+).

It belongs to the archaeal SPP-like hydrolase family. Mg(2+) serves as cofactor.

It catalyses the reaction 2-phosphoglycolate + H2O = glycolate + phosphate. Functionally, catalyzes the dephosphorylation of 2-phosphoglycolate. In Sulfolobus acidocaldarius (strain ATCC 33909 / DSM 639 / JCM 8929 / NBRC 15157 / NCIMB 11770), this protein is Phosphoglycolate phosphatase.